Reading from the N-terminus, the 252-residue chain is MMDCRDASACQGVGSLCFFPYLNPLVSWHALVLGHLLYLFVVFVMRSIMRGRRALNMSRVLVVYNVLQICLSAAMAINLSPPLKNGVFNLSGKFCPDIEFWMFVHYCSKYIDMLDTVFILCKKKEDQLSFLHVYHHCTIGLIWGILLRNGLANGTAFFGTWINSSVHFLMYSHYLWTSLGYRNPFKFLLTKIQMLQFSLCILHAILVTLLDTQFTLGWNLLQLLYNASLLVLFLNFYMNSRGKGCAIEKKPQ.

Residues 25–45 form a helical membrane-spanning segment; it reads LVSWHALVLGHLLYLFVVFVM. An N-linked (GlcNAc...) asparagine glycan is attached at Asn-56. A helical membrane pass occupies residues 60 to 80; it reads VLVVYNVLQICLSAAMAINLS. An N-linked (GlcNAc...) asparagine glycan is attached at Asn-89. Transmembrane regions (helical) follow at residues 100–120, 127–147, 150–170, 187–207, and 214–234; these read FWMF…VFIL, QLSF…GILL, GLAN…HFLM, FLLT…AILV, and FTLG…VLFL. Positions 132–136 match the HxxHH motif motif; it reads HVYHH. His-135 (nucleophile) is an active-site residue.

The protein belongs to the ELO family.

It is found in the membrane. The enzyme catalyses (5Z,8Z,11Z,14Z)-eicosatetraenoyl-CoA + malonyl-CoA + H(+) = (7Z,10Z,13Z,16Z)-3-oxodocosatetraenoyl-CoA + CO2 + CoA. The protein operates within lipid metabolism; fatty acid biosynthesis. Involved in the synthesis of fatty acids. Elongates arachidonate and other C20 polyunsaturated fatty acids (PUFAs) with a preference for n-6 PUFAs. Not involved in fatty acid synthesis up to C18. This Trypanosoma brucei brucei (strain 927/4 GUTat10.1) protein is Fatty acid elongase 4.